Here is a 443-residue protein sequence, read N- to C-terminus: Protoheme IX farnesyltransferase, mitochondrial (443 aa).

The disordered stretch occupies residues 68–113; sequence LSQRVKPKPEPPASPFLEHTSSGQARADEDELPSFPAPSRPLSRKP. 7 consecutive transmembrane segments (helical) span residues 174 to 194, 230 to 250, 252 to 272, 286 to 306, 308 to 328, 363 to 383, and 410 to 430; these read AGFA…TSLG, ISPL…VALL, WGVN…YTCC, VGAV…TGSL, AGAL…FNAL, LIAL…FPVI, and LFFC…TCKQ.

This sequence belongs to the UbiA prenyltransferase family.

It is found in the mitochondrion membrane. It carries out the reaction heme b + (2E,6E)-farnesyl diphosphate + H2O = Fe(II)-heme o + diphosphate. In terms of biological role, converts protoheme IX and farnesyl diphosphate to heme O. This chain is Protoheme IX farnesyltransferase, mitochondrial (Cox10), found in Mus musculus (Mouse).